The chain runs to 937 residues: Leucine--tRNA ligase (937 aa).

The 'HIGH' region signature appears at 34–44 (PYPSGAMHIGH). The 'KMSKS' region signature appears at 609–613 (KMSSS).

The protein belongs to the class-I aminoacyl-tRNA synthetase family.

It localises to the cytoplasm. The catalysed reaction is tRNA(Leu) + L-leucine + ATP = L-leucyl-tRNA(Leu) + AMP + diphosphate. This chain is Leucine--tRNA ligase, found in Methanothermobacter thermautotrophicus (strain ATCC 29096 / DSM 1053 / JCM 10044 / NBRC 100330 / Delta H) (Methanobacterium thermoautotrophicum).